Reading from the N-terminus, the 272-residue chain is Glutamate racemase (272 aa).

Residues 10 to 11 and 42 to 43 contribute to the substrate site; these read DS and YG. Cys-74 acts as the Proton donor/acceptor in catalysis. 75-76 contributes to the substrate binding site; that stretch reads NT. Cys-185 serves as the catalytic Proton donor/acceptor. Residue 186–187 participates in substrate binding; it reads TH.

This sequence belongs to the aspartate/glutamate racemases family.

The enzyme catalyses L-glutamate = D-glutamate. It participates in cell wall biogenesis; peptidoglycan biosynthesis. In terms of biological role, provides the (R)-glutamate required for cell wall biosynthesis. This is Glutamate racemase from Bacillus pumilus (strain SAFR-032).